A 108-amino-acid polypeptide reads, in one-letter code: Malonate decarboxylase acyl carrier protein (108 aa).

Position 35 is an O-(phosphoribosyl dephospho-coenzyme A)serine (Ser35).

The protein belongs to the MdcC family. Post-translationally, covalently binds the prosthetic group of malonate decarboxylase.

It localises to the cytoplasm. Functionally, subunit of malonate decarboxylase, it is an acyl carrier protein to which acetyl and malonyl thioester residues are bound via a 2'-(5''-phosphoribosyl)-3'-dephospho-CoA prosthetic group and turn over during the catalytic mechanism. The polypeptide is Malonate decarboxylase acyl carrier protein (Burkholderia cepacia (Pseudomonas cepacia)).